The chain runs to 269 residues: Leucinostatins biosynthesis cluster protein T (269 aa).

The N-terminal stretch at 1–15 (MHIILTGTGLVGAIA) is a signal peptide. Asparagine 254 carries N-linked (GlcNAc...) asparagine glycosylation.

In terms of biological role, part of the gene cluster that mediates the biosynthesis of the lipopeptide antibiotics leucinostatins that show extensive biological activities, including antimalarial, antiviral, antibacterial, antifungal, and antitumor activities, as well as phytotoxic. The function of lcsT within the leucinostatins biosynthesis has not been identified yet. This chain is Leucinostatins biosynthesis cluster protein T, found in Purpureocillium lilacinum (Paecilomyces lilacinus).